The chain runs to 376 residues: Phosphoserine aminotransferase (376 aa).

Arginine 42 provides a ligand contact to L-glutamate. Residues tryptophan 104, threonine 163, aspartate 188, and glutamine 211 each contribute to the pyridoxal 5'-phosphate site. N6-(pyridoxal phosphate)lysine is present on lysine 212. 253-254 (NT) provides a ligand contact to pyridoxal 5'-phosphate.

This sequence belongs to the class-V pyridoxal-phosphate-dependent aminotransferase family. SerC subfamily. In terms of assembly, homodimer. The cofactor is pyridoxal 5'-phosphate.

It is found in the cytoplasm. It carries out the reaction O-phospho-L-serine + 2-oxoglutarate = 3-phosphooxypyruvate + L-glutamate. It catalyses the reaction 4-(phosphooxy)-L-threonine + 2-oxoglutarate = (R)-3-hydroxy-2-oxo-4-phosphooxybutanoate + L-glutamate. Its pathway is amino-acid biosynthesis; L-serine biosynthesis; L-serine from 3-phospho-D-glycerate: step 2/3. It participates in cofactor biosynthesis; pyridoxine 5'-phosphate biosynthesis; pyridoxine 5'-phosphate from D-erythrose 4-phosphate: step 3/5. Catalyzes the reversible conversion of 3-phosphohydroxypyruvate to phosphoserine and of 3-hydroxy-2-oxo-4-phosphonooxybutanoate to phosphohydroxythreonine. The chain is Phosphoserine aminotransferase from Bordetella avium (strain 197N).